Consider the following 497-residue polypeptide: MSAIPGFGGDLNSNIDEDSNLNKSSVVEINGQSEWRFEVPFRTIMKLKVVNGIGEIFGTELPLNVEISLTGVKYAIYAPLDEGCKVEYYCVSNKANSTSTNEDDEISEYISEETSMNHYMNLHFALESYRQSISEHNFVNSSSQKTGPRVLVVGNRHSGKTSLVKTLASYGCKMDRSPILVNLNPRDGVFSVPGSLTATPISDAFDLESVNGWGGSTTSGSTFHNPKQPLVKNYGFTSHSDNLDLYKYQISKLGVAVVSRMEEDIAVKNSGLLIDTPPLSIKDFTIIENIVSDFEVNIIVVIGNERLLIDLKKKFKHKIASSQLDFVKVPKSGGVIEVDDAYIRKSQEESIKEYFNGTIRSPLSPFKTELDAKDFVIYKCVDSSEANSNLSFLPSGDSFTPEASEMSDGDKKEEFSLDTYYSQLQEPSSSNLDNSIVAITQLPQNNKSARDLMNTCVLGYAHVSKFDDTKSKMKVLLPFPGALPRNILISTSVGYTE.

Residues glutamate 34, lysine 73, and histidine 157–serine 162 contribute to the ATP site.

It belongs to the Clp1 family. Clp1 subfamily. Component of a pre-mRNA cleavage factor complex. Interacts directly with PCF11.

It is found in the nucleus. Functionally, required for endonucleolytic cleavage during polyadenylation-dependent pre-mRNA 3'-end formation. In Debaryomyces hansenii (strain ATCC 36239 / CBS 767 / BCRC 21394 / JCM 1990 / NBRC 0083 / IGC 2968) (Yeast), this protein is mRNA cleavage and polyadenylation factor CLP1.